The primary structure comprises 556 residues: Potassium-transporting ATPase potassium-binding subunit (556 aa).

The next 10 helical transmembrane spans lie at 5 to 25, 65 to 85, 133 to 153, 176 to 196, 249 to 269, 283 to 303, 377 to 397, 415 to 435, 483 to 503, and 526 to 546; these read LAGILFLASLVIALVAVHVPL, SVLAFSAVSLLFLFILQLVQG, GLAVQNFVSAAVGMAVAIALV, IRILLPISVIAAILLITGGAI, PTTWTNWIEIFLLLVIAFSLP, YAIVGVQAVLAVISWSATLFF, AGLYGILILAVITVFVAGLMV, LAATYFLVTPLIVLTGTAVAM, ALGLAMVFGRFLPIILALALA, and FVGMVAGVTLILVALTFLPML.

The protein belongs to the KdpA family. In terms of assembly, the system is composed of three essential subunits: KdpA, KdpB and KdpC.

It is found in the cell membrane. Its function is as follows. Part of the high-affinity ATP-driven potassium transport (or Kdp) system, which catalyzes the hydrolysis of ATP coupled with the electrogenic transport of potassium into the cytoplasm. This subunit binds the extracellular potassium ions and delivers the ions to the membrane domain of KdpB through an intramembrane tunnel. The chain is Potassium-transporting ATPase potassium-binding subunit from Mycolicibacterium vanbaalenii (strain DSM 7251 / JCM 13017 / BCRC 16820 / KCTC 9966 / NRRL B-24157 / PYR-1) (Mycobacterium vanbaalenii).